A 153-amino-acid chain; its full sequence is Large ribosomal subunit protein uL30 (153 aa).

It belongs to the universal ribosomal protein uL30 family. Part of the 50S ribosomal subunit.

In Methanocella arvoryzae (strain DSM 22066 / NBRC 105507 / MRE50), this protein is Large ribosomal subunit protein uL30.